A 70-amino-acid chain; its full sequence is Translational regulator CsrA (70 aa).

It belongs to the CsrA/RsmA family. In terms of assembly, homodimer; the beta-strands of each monomer intercalate to form a hydrophobic core, while the alpha-helices form wings that extend away from the core.

The protein resides in the cytoplasm. Functionally, a translational regulator that binds mRNA to regulate translation initiation and/or mRNA stability. Usually binds in the 5'-UTR at or near the Shine-Dalgarno sequence preventing ribosome-binding, thus repressing translation. Its main target seems to be the major flagellin gene, while its function is anatagonized by FliW. This chain is Translational regulator CsrA, found in Clostridioides difficile (strain 630) (Peptoclostridium difficile).